The chain runs to 148 residues: SsrA-binding protein (148 aa).

Residues 128-148 (ESIAKKDQERNLKREFKNNNR) form a disordered region.

Belongs to the SmpB family.

It is found in the cytoplasm. In terms of biological role, required for rescue of stalled ribosomes mediated by trans-translation. Binds to transfer-messenger RNA (tmRNA), required for stable association of tmRNA with ribosomes. tmRNA and SmpB together mimic tRNA shape, replacing the anticodon stem-loop with SmpB. tmRNA is encoded by the ssrA gene; the 2 termini fold to resemble tRNA(Ala) and it encodes a 'tag peptide', a short internal open reading frame. During trans-translation Ala-aminoacylated tmRNA acts like a tRNA, entering the A-site of stalled ribosomes, displacing the stalled mRNA. The ribosome then switches to translate the ORF on the tmRNA; the nascent peptide is terminated with the 'tag peptide' encoded by the tmRNA and targeted for degradation. The ribosome is freed to recommence translation, which seems to be the essential function of trans-translation. The sequence is that of SsrA-binding protein from Fusobacterium nucleatum subsp. nucleatum (strain ATCC 25586 / DSM 15643 / BCRC 10681 / CIP 101130 / JCM 8532 / KCTC 2640 / LMG 13131 / VPI 4355).